The following is a 235-amino-acid chain: Large ribosomal subunit protein uL1 (235 aa).

This sequence belongs to the universal ribosomal protein uL1 family. As to quaternary structure, part of the 50S ribosomal subunit.

In terms of biological role, binds directly to 23S rRNA. The L1 stalk is quite mobile in the ribosome, and is involved in E site tRNA release. Functionally, protein L1 is also a translational repressor protein, it controls the translation of the L11 operon by binding to its mRNA. In Nitratidesulfovibrio vulgaris (strain ATCC 29579 / DSM 644 / CCUG 34227 / NCIMB 8303 / VKM B-1760 / Hildenborough) (Desulfovibrio vulgaris), this protein is Large ribosomal subunit protein uL1.